Consider the following 226-residue polypeptide: Biosynthetic peptidoglycan transglycosylase (226 aa).

The chain crosses the membrane as a helical span at residues 5 to 25; the sequence is IGVTVLAVVGLLLLPYLLTPL.

This sequence belongs to the glycosyltransferase 51 family.

Its subcellular location is the cell inner membrane. The enzyme catalyses [GlcNAc-(1-&gt;4)-Mur2Ac(oyl-L-Ala-gamma-D-Glu-L-Lys-D-Ala-D-Ala)](n)-di-trans,octa-cis-undecaprenyl diphosphate + beta-D-GlcNAc-(1-&gt;4)-Mur2Ac(oyl-L-Ala-gamma-D-Glu-L-Lys-D-Ala-D-Ala)-di-trans,octa-cis-undecaprenyl diphosphate = [GlcNAc-(1-&gt;4)-Mur2Ac(oyl-L-Ala-gamma-D-Glu-L-Lys-D-Ala-D-Ala)](n+1)-di-trans,octa-cis-undecaprenyl diphosphate + di-trans,octa-cis-undecaprenyl diphosphate + H(+). Its pathway is cell wall biogenesis; peptidoglycan biosynthesis. Peptidoglycan polymerase that catalyzes glycan chain elongation from lipid-linked precursors. In Nitrobacter hamburgensis (strain DSM 10229 / NCIMB 13809 / X14), this protein is Biosynthetic peptidoglycan transglycosylase.